The following is a 64-amino-acid chain: Large ribosomal subunit protein uL29 (64 aa).

Belongs to the universal ribosomal protein uL29 family.

This Polynucleobacter necessarius subsp. necessarius (strain STIR1) protein is Large ribosomal subunit protein uL29.